The primary structure comprises 595 residues: Trafficking protein particle complex subunit 14 (595 aa).

Disordered regions lie at residues 84-111 (ASVS…ECVE) and 494-513 (SNPP…SSPA).

In terms of assembly, component of the multisubunit TRAPP II complex, which includes at least TRAPPC1, TRAPPC2, TRAPPC2L, TRAPPC3, TRAPPC4, TRAPPC5, TRAPPC6A/B, TRAPPC9, TRAPPC10 and TRAPPC14. TRAPPC9, TRAPPC10 and TRAPPC14 are specific subunits of the TRAPP II complex. Interacts with alpha-tubulin during mitosis.

Its subcellular location is the cytoplasm. It localises to the cytoskeleton. It is found in the spindle. The protein resides in the vesicle. The protein localises to the midbody. Specific subunit of the TRAPP (transport protein particle) II complex, a highly conserved vesicle tethering complex that functions in late Golgi trafficking as a membrane tether. TRAPP II complex also has GEF activity toward RAB1A. TRAPPC14 is required for ciliogenesis. This Danio rerio (Zebrafish) protein is Trafficking protein particle complex subunit 14 (trappc14).